Reading from the N-terminus, the 337-residue chain is Zinc finger protein Gfi-1b (337 aa).

The mediates repression of transcription stretch occupies residues 1–20 (MPRSFLVKSKKAHTYHQHRF). An SNAG domain region spans residues 1-20 (MPRSFLVKSKKAHTYHQHRF). 6 consecutive C2H2-type zinc fingers follow at residues 170–193 (YHCVKCNKVFSTPHGLEVHVRRSH), 199–221 (FACEVCGKTFGHAVSLEQHTNIH), 227–249 (FECKMCGKTFKRSSTLSTHLLIH), 255–277 (YPCQYCGKRFHQKSDMKKHTYIH), 283–305 (HKCQVCGKAFSQSSNLITHSRKH), and 311–334 (FSCELCAKGFQRKVDLRRHRETQH).

Expressed in erythroid cells of primitive and definitive lineage and bone marrow cells.

It is found in the nucleus. Functionally, essential transcriptional regulator necessary for development and differentiation of erythroid and megakaryocytic lineages. Alters histone methylation by recruiting histone methyltransferase to target genes promoters. Plays a role in heterochromatin formation. In Gallus gallus (Chicken), this protein is Zinc finger protein Gfi-1b (GFI1B).